The primary structure comprises 69 residues: Cytochrome c oxidase subunit 8A, mitochondrial (69 aa).

Residues 1–25 constitute a mitochondrion transit peptide; the sequence is MSVLTPLLLRSLTGSARRLMVPRAQ. Residues 2–19 carry the SIFI-degron motif; sequence SVLTPLLLRSLTGSARRL. Residues 26–36 lie on the Mitochondrial matrix side of the membrane; sequence VHSKPAREQLG. Residues 37 to 60 form a helical membrane-spanning segment; it reads VLDITIGLTSCFVCCLLPAGWVLS. Over 61–69 the chain is Mitochondrial intermembrane; sequence HLESYKKRE.

The protein belongs to the cytochrome c oxidase VIII family. Component of the cytochrome c oxidase (complex IV, CIV), a multisubunit enzyme composed of 14 subunits. The complex is composed of a catalytic core of 3 subunits MT-CO1, MT-CO2 and MT-CO3, encoded in the mitochondrial DNA, and 11 supernumerary subunits COX4I, COX5A, COX5B, COX6A, COX6B, COX6C, COX7A, COX7B, COX7C, COX8 and NDUFA4, which are encoded in the nuclear genome. The complex exists as a monomer or a dimer and forms supercomplexes (SCs) in the inner mitochondrial membrane with NADH-ubiquinone oxidoreductase (complex I, CI) and ubiquinol-cytochrome c oxidoreductase (cytochrome b-c1 complex, complex III, CIII), resulting in different assemblies (supercomplex SCI(1)III(2)IV(1) and megacomplex MCI(2)III(2)IV(2)). In terms of processing, in response to mitochondrial stress, the precursor protein is ubiquitinated by the SIFI complex in the cytoplasm before mitochondrial import, leading to its degradation. Within the SIFI complex, UBR4 initiates ubiquitin chain that are further elongated or branched by KCMF1.

The protein localises to the mitochondrion inner membrane. It participates in energy metabolism; oxidative phosphorylation. In terms of biological role, component of the cytochrome c oxidase, the last enzyme in the mitochondrial electron transport chain which drives oxidative phosphorylation. The respiratory chain contains 3 multisubunit complexes succinate dehydrogenase (complex II, CII), ubiquinol-cytochrome c oxidoreductase (cytochrome b-c1 complex, complex III, CIII) and cytochrome c oxidase (complex IV, CIV), that cooperate to transfer electrons derived from NADH and succinate to molecular oxygen, creating an electrochemical gradient over the inner membrane that drives transmembrane transport and the ATP synthase. Cytochrome c oxidase is the component of the respiratory chain that catalyzes the reduction of oxygen to water. Electrons originating from reduced cytochrome c in the intermembrane space (IMS) are transferred via the dinuclear copper A center (CU(A)) of subunit 2 and heme A of subunit 1 to the active site in subunit 1, a binuclear center (BNC) formed by heme A3 and copper B (CU(B)). The BNC reduces molecular oxygen to 2 water molecules using 4 electrons from cytochrome c in the IMS and 4 protons from the mitochondrial matrix. The polypeptide is Cytochrome c oxidase subunit 8A, mitochondrial (Cox8a) (Mus musculus (Mouse)).